The chain runs to 239 residues: Ribosomal RNA small subunit methyltransferase G (239 aa).

Residues G95, L100, 118 to 120 (EAT), 146 to 147 (AE), and R164 each bind S-adenosyl-L-methionine.

The protein belongs to the methyltransferase superfamily. RNA methyltransferase RsmG family.

The protein resides in the cytoplasm. It catalyses the reaction guanosine(527) in 16S rRNA + S-adenosyl-L-methionine = N(7)-methylguanosine(527) in 16S rRNA + S-adenosyl-L-homocysteine. Its function is as follows. Specifically methylates the N7 position of guanine in position 527 of 16S rRNA. The sequence is that of Ribosomal RNA small subunit methyltransferase G from Sorangium cellulosum (strain So ce56) (Polyangium cellulosum (strain So ce56)).